The sequence spans 669 residues: UvrABC system protein B (669 aa).

The region spanning 27-414 is the Helicase ATP-binding domain; that stretch reads ESLQGEHKFQ…EARVIEQVIR (388 aa). 40 to 47 serves as a coordination point for ATP; the sequence is GATGTGKT. The Beta-hairpin signature appears at 93–116; that stretch reads YYDYYQPEAYIPVTDTYIEKTASI. Residues 431 to 597 enclose the Helicase C-terminal domain; the sequence is QVDDLYGEIQ…PINKRANNAI (167 aa). Positions 628 to 663 constitute a UVR domain; sequence PDLIQQLEEKMQEAAKKQEFEVAAIYRDRIQHLRDR.

Belongs to the UvrB family. Forms a heterotetramer with UvrA during the search for lesions. Interacts with UvrC in an incision complex.

It is found in the cytoplasm. The UvrABC repair system catalyzes the recognition and processing of DNA lesions. A damage recognition complex composed of 2 UvrA and 2 UvrB subunits scans DNA for abnormalities. Upon binding of the UvrA(2)B(2) complex to a putative damaged site, the DNA wraps around one UvrB monomer. DNA wrap is dependent on ATP binding by UvrB and probably causes local melting of the DNA helix, facilitating insertion of UvrB beta-hairpin between the DNA strands. Then UvrB probes one DNA strand for the presence of a lesion. If a lesion is found the UvrA subunits dissociate and the UvrB-DNA preincision complex is formed. This complex is subsequently bound by UvrC and the second UvrB is released. If no lesion is found, the DNA wraps around the other UvrB subunit that will check the other stand for damage. This chain is UvrABC system protein B, found in Synechocystis sp. (strain ATCC 27184 / PCC 6803 / Kazusa).